We begin with the raw amino-acid sequence, 442 residues long: ATP-dependent protease ATPase subunit HslU (442 aa).

ATP is bound by residues isoleucine 18 and 60-65 (GVGKTE). The segment at 136 to 156 (LPKPKNDWDSTDSDANSNTRQ) is disordered. ATP-binding residues include aspartate 255, glutamate 320, and arginine 392.

It belongs to the ClpX chaperone family. HslU subfamily. In terms of assembly, a double ring-shaped homohexamer of HslV is capped on each side by a ring-shaped HslU homohexamer. The assembly of the HslU/HslV complex is dependent on binding of ATP.

It is found in the cytoplasm. Functionally, ATPase subunit of a proteasome-like degradation complex; this subunit has chaperone activity. The binding of ATP and its subsequent hydrolysis by HslU are essential for unfolding of protein substrates subsequently hydrolyzed by HslV. HslU recognizes the N-terminal part of its protein substrates and unfolds these before they are guided to HslV for hydrolysis. This chain is ATP-dependent protease ATPase subunit HslU, found in Shewanella sp. (strain MR-7).